Consider the following 159-residue polypeptide: Phosphopantetheine adenylyltransferase (159 aa).

Ser9 provides a ligand contact to substrate. ATP-binding positions include 9–10 and His17; that span reads SF. Substrate contacts are provided by Lys41, Leu73, and Lys87. Residues 88-90, Glu98, and 123-129 each bind ATP; these read GLR and NIHISSS.

This sequence belongs to the bacterial CoaD family. Homohexamer. Mg(2+) serves as cofactor.

The protein localises to the cytoplasm. It carries out the reaction (R)-4'-phosphopantetheine + ATP + H(+) = 3'-dephospho-CoA + diphosphate. It functions in the pathway cofactor biosynthesis; coenzyme A biosynthesis; CoA from (R)-pantothenate: step 4/5. Functionally, reversibly transfers an adenylyl group from ATP to 4'-phosphopantetheine, yielding dephospho-CoA (dPCoA) and pyrophosphate. The polypeptide is Phosphopantetheine adenylyltransferase (Clostridium beijerinckii (strain ATCC 51743 / NCIMB 8052) (Clostridium acetobutylicum)).